The chain runs to 107 residues: Phosphoribosyl-ATP pyrophosphatase (107 aa).

The protein belongs to the PRA-PH family.

It is found in the cytoplasm. It carries out the reaction 1-(5-phospho-beta-D-ribosyl)-ATP + H2O = 1-(5-phospho-beta-D-ribosyl)-5'-AMP + diphosphate + H(+). It participates in amino-acid biosynthesis; L-histidine biosynthesis; L-histidine from 5-phospho-alpha-D-ribose 1-diphosphate: step 2/9. In Bacillus cereus (strain AH187), this protein is Phosphoribosyl-ATP pyrophosphatase.